A 901-amino-acid polypeptide reads, in one-letter code: Phosphatidylinositol 3-kinase catalytic subunit type 3 (901 aa).

Positions 21-189 (LQTNVQVKVA…DLLFKQVTRQ (169 aa)) constitute a C2 PI3K-type domain. The PIK helical domain maps to 302 to 527 (RHRQVKPNKQ…SKMYQNIQDR (226 aa)). One can recognise a PI3K/PI4K catalytic domain in the interval 607 to 886 (IPDTASFFKS…QIESSLNAKM (280 aa)). Positions 613-619 (FFKSEMM) are G-loop. The catalytic loop stretch occupies residues 755–763 (GLGDRHLDN). Residues 774–795 (HVDFGFILGRDPKPMPPPMKLT) are activation loop.

The protein belongs to the PI3/PI4-kinase family. As to quaternary structure, interacts with bec-1. May interact with dyn-1. It depends on Mn(2+) as a cofactor. Ubiquitous.

It is found in the nucleus outer membrane. It localises to the cytoplasm. The protein localises to the cytoplasmic granule. The protein resides in the cell projection. Its subcellular location is the phagocytic cup. The catalysed reaction is a 1,2-diacyl-sn-glycero-3-phospho-(1D-myo-inositol) + ATP = a 1,2-diacyl-sn-glycero-3-phospho-(1D-myo-inositol-3-phosphate) + ADP + H(+). With respect to regulation, inhibited by wortmannin. Catalytic subunit of the PI3K complex that mediates formation of phosphatidylinositol 3-phosphate. Together with bec-1, mediates the production of phosphatidylinositol 3-phosphate on intracellular vesicles and thereby regulates membrane trafficking. Plays a role in endosome-to-Golgi retrograde transport of mig-14. Involved in clearance of apoptotic cell corpses by phagosomes. Phagosome maturation requires two sequential and non-overlapping pulses of phosphatidylinositol-3-phosphate (PI3P) on the vesicle surface which mediates recruitment of sortins snx-1 and lst-4 and small GTPases rab-5, rab-2 and rab-7, downstream of dynamin dyn-1. The first pulse is initiated by piki-1, then maintained by vps-34 which also produces the second pulse. Required for embryonic development. Together with bec-1, involved in L3/L4 larval molting stage probably by regulating cuticle shedding. Regulates the expansion of the nucleus outer membrane. Involved in the secretion and localization of lrp-1 at the apical surface of hyp7 syncytium. May regulate endocytosis in hypodermal cells. May play a role in the formation of gut granules (a lysosome-related organelle). Plays a role in germ stem cell proliferation during larval development. This Caenorhabditis elegans protein is Phosphatidylinositol 3-kinase catalytic subunit type 3.